We begin with the raw amino-acid sequence, 421 residues long: Signal recognition particle receptor FtsY (421 aa).

Residues 1-10 (MFSFFRRKKK) show a composition bias toward basic residues. Residues 1–22 (MFSFFRRKKKQETPAPEEAQIQ) are disordered. Residues 228–235 (GINGAGKT), 309–313 (DTAGR), and 373–376 (TKLD) each bind GTP.

This sequence belongs to the GTP-binding SRP family. FtsY subfamily. In terms of assembly, part of the signal recognition particle protein translocation system, which is composed of SRP and FtsY. SRP is a ribonucleoprotein composed of Ffh and a 4.5S RNA molecule.

Its subcellular location is the cell membrane. The protein localises to the cytoplasm. The catalysed reaction is GTP + H2O = GDP + phosphate + H(+). Involved in targeting and insertion of nascent membrane proteins into the cytoplasmic membrane. Acts as a receptor for the complex formed by the signal recognition particle (SRP) and the ribosome-nascent chain (RNC). Interaction with SRP-RNC leads to the transfer of the RNC complex to the Sec translocase for insertion into the membrane, the hydrolysis of GTP by both Ffh and FtsY, and the dissociation of the SRP-FtsY complex into the individual components. This is Signal recognition particle receptor FtsY from Neisseria meningitidis serogroup C.